Consider the following 214-residue polypeptide: Large ribosomal subunit protein uL4c (214 aa).

Residues 42-81 form a disordered region; that stretch reads VKQSNEKRQGSANTKTRSEVRGGGRKPWRQKGTGRARAGS. A compositionally biased stretch (basic residues) spans 64-75; it reads GGRKPWRQKGTG.

The protein belongs to the universal ribosomal protein uL4 family. In terms of assembly, part of the 50S ribosomal subunit.

It localises to the plastid. The protein resides in the chloroplast. Probably binds the 23S rRNA. The protein is Large ribosomal subunit protein uL4c (rpl4) of Pyropia yezoensis (Susabi-nori).